Reading from the N-terminus, the 102-residue chain is Cuticle protein AM/CP1114 (102 aa).

The Chitin-binding type R&amp;R domain maps to 16 to 81; it reads DGNFHYSFET…VESPLLPSIP (66 aa). Residues 23–33 show a composition bias toward polar residues; that stretch reads FETSNGIQDTK. Positions 23-50 are disordered; the sequence is FETSNGIQDTKTGVPGSAGQSNMNGDFS.

In terms of tissue distribution, arthrodial membrane and calcified shell.

The polypeptide is Cuticle protein AM/CP1114 (Cancer pagurus (Rock crab)).